Reading from the N-terminus, the 419-residue chain is Putative actin-fragmin kinase DDB_G0279609 (419 aa).

The interval 73-94 (INNNNNSINNNNNNNNKNKNKN) is disordered.

Belongs to the protein kinase superfamily. AFK Ser/Thr protein kinase family.

This is Putative actin-fragmin kinase DDB_G0279609 from Dictyostelium discoideum (Social amoeba).